Reading from the N-terminus, the 193-residue chain is MIRCGLACERCRWILPLLLLSAIAFDIIALAGRGWLQSSDHGQTSSLWWKCSQEGGGSGSYEEGCQSLMEYAWGRAAAAMLFCGFIILVICFILSFFALCGPQMLVFLRVIGGLLALAAVFQIISLVIYPVKYTQTFTLHANPAVTYIYNWAYGFGWAATIILIGCAFFFCCLPNYEDDLLGNAKPRYFYTSA.

The next 4 helical transmembrane spans lie at 12–32 (RWILPLLLLSAIAFDIIALAG), 79–99 (AMLFCGFIILVICFILSFFAL), 110–130 (VIGGLLALAAVFQIISLVIYP), and 151–171 (WAYGFGWAATIILIGCAFFFC).

This sequence belongs to the TMEM47 family. In terms of assembly, (Microbial infection) Interacts with S.typhimurium sipA and sctB1/sipC. As to expression, expressed in skin, heart, placental, liver, pancreas, keratinocytes and dermal fibroblasts. May translocate to the intestinal apical epithelial cell surface via sipA and sctB1/sipC-promoted exocytic translocation following infection by S. Typhimurium.

It is found in the cell junction. The protein localises to the desmosome. The protein resides in the cell membrane. It localises to the cytoplasm. Component of intercellular desmosome junctions. Plays a role in stratified epithelial integrity and cell-cell adhesion by promoting desmosome assembly. Thereby plays a role in barrier function of the skin against infection. Plays a role in mammary epithelial tissue homeostasis and remodeling during and after pregnancy, potentially via its involvement in desmosome cell-cell junctions. Required for tooth enamel development via facilitating desmosome-mediated ameloblast adhesion to the stratum intermedium during the transitional stage of amelogenesis. May also play a role in downstream transcriptional regulation of other genes involved in amelogenesis such as AMBN, ENAM, MMP20 and KLK4. Plays a role as an effector in the TP53-dependent apoptotic pathway. Positively regulates apoptosis in T-helper 17 (Th17) cell populations via caspase-dependent signaling. Promotes neutrophil transepithelial migration in response to chemoattractants such as hepoxilin A3 (HXA3), N-Formylmethionyl-leucyl-phenylalanine (fMLP) and CXCL8/IL-8. Required for neutrophil transepithelial migration in response to S.typhimurium infection. May act as a positive regulator of endothelial cell apoptosis in response to blood flow-derived shear stress. The chain is p53 apoptosis effector related to PMP-22 from Homo sapiens (Human).